Here is a 494-residue protein sequence, read N- to C-terminus: Alpha-amylase-related protein (494 aa).

The first 20 residues, 1 to 20 (MFKFASAVILCLVAASSTQA), serve as a signal peptide directing secretion. Glutamine 21 carries the post-translational modification Pyrrolidone carboxylic acid. Cysteine 48 and cysteine 104 are oxidised to a cystine. Ca(2+) is bound by residues asparagine 118, glutamine 169, and aspartate 178. An intrachain disulfide couples cysteine 157 to cysteine 171. Arginine 206 serves as a coordination point for chloride. Aspartate 208 serves as the catalytic Nucleophile. Histidine 212 is a Ca(2+) binding site. Residue glutamate 245 is the Proton donor of the active site. Positions 308 and 343 each coordinate chloride. Intrachain disulfides connect cysteine 376–cysteine 382, cysteine 418–cysteine 441, and cysteine 448–cysteine 460.

Belongs to the glycosyl hydrolase 13 family. As to quaternary structure, monomer. The cofactor is Ca(2+). Requires chloride as cofactor.

It is found in the secreted. The catalysed reaction is Endohydrolysis of (1-&gt;4)-alpha-D-glucosidic linkages in polysaccharides containing three or more (1-&gt;4)-alpha-linked D-glucose units.. This Drosophila ercepeae (Fruit fly) protein is Alpha-amylase-related protein (Amyrel).